The chain runs to 395 residues: Elongation factor Tu (395 aa).

Residues 10–204 enclose the tr-type G domain; that stretch reads KPHVNVGTIG…AVDEYIPEPT (195 aa). The G1 stretch occupies residues 19 to 26; it reads GHVDHGKT. Residue 19–26 coordinates GTP; it reads GHVDHGKT. Residue Thr26 participates in Mg(2+) binding. The tract at residues 60 to 64 is G2; sequence GITIA. Positions 81-84 are G3; that stretch reads DCPG. Residues 81 to 85 and 136 to 139 each bind GTP; these read DCPGH and NKVD. The tract at residues 136–139 is G4; sequence NKVD. The interval 174–176 is G5; sequence SAL.

It belongs to the TRAFAC class translation factor GTPase superfamily. Classic translation factor GTPase family. EF-Tu/EF-1A subfamily. As to quaternary structure, monomer.

It is found in the cytoplasm. It carries out the reaction GTP + H2O = GDP + phosphate + H(+). Functionally, GTP hydrolase that promotes the GTP-dependent binding of aminoacyl-tRNA to the A-site of ribosomes during protein biosynthesis. This Exiguobacterium sibiricum (strain DSM 17290 / CCUG 55495 / CIP 109462 / JCM 13490 / 255-15) protein is Elongation factor Tu.